Consider the following 234-residue polypeptide: Serum amyloid P-component (234 aa).

Residues 1 to 22 form the signal peptide; that stretch reads MDKLLSLLGVSILAGLLLEAFA. The 200-residue stretch at 27–226 folds into the Pentraxin (PTX) domain; it reads TGKVFVFPRQ…YAVIRPRCVA (200 aa). Asn-54 carries N-linked (GlcNAc...) asparagine glycosylation. The cysteines at positions 58 and 117 are disulfide-linked. 5 residues coordinate Ca(2+): Asn-81, Glu-158, Gln-159, Asp-160, and Gln-170.

It belongs to the pentraxin family. As to quaternary structure, homopentamer. Pentraxin (or pentaxin) have a discoid arrangement of 5 non-covalently bound subunits. It depends on Ca(2+) as a cofactor.

It localises to the secreted. This chain is Serum amyloid P-component (APCS), found in Mesocricetus auratus (Golden hamster).